Consider the following 102-residue polypeptide: Large ribosomal subunit protein bL21 (102 aa).

Belongs to the bacterial ribosomal protein bL21 family. In terms of assembly, part of the 50S ribosomal subunit. Contacts protein L20.

Functionally, this protein binds to 23S rRNA in the presence of protein L20. The chain is Large ribosomal subunit protein bL21 from Photorhabdus laumondii subsp. laumondii (strain DSM 15139 / CIP 105565 / TT01) (Photorhabdus luminescens subsp. laumondii).